The sequence spans 447 residues: MEQRSFFIKTYGCQMNLRDSEIIAQILNNNGYVETSEIGGADLVLLNTCSIRAKAEQKVMSKLGELRRNKKINPRMQICVAGCVAQQEGKQIQAKMPHVDLVIGTQYIYAINELLERSRTEGPITATNLDDKYVIPQFIPETTGKEHEGEFRKFVTIMQGCNNFCTYCVVPYTRGREVSRSIKDIVEEITVLVKSGIKEITLLGQNVNSYAQTNTVTEDDTPATFSDLLRQVAAVEGLKRLRFTTSNPKDLSNDLMQCFKDLDVLCPQFHLPVQAGSNKVLKEMGRKYTVESYLDLVTQLRENCPEIAITTDIIVGFPGETDEEFEETMKMLETVRYHGSFSFKYSDRPGTKANELTNKVDESVKSARLARFQARQDEIGLERNQEYIGTTQEVLIEELRDGEIKGRMGTNHIVHAIGLTNKKPGDFLMAHVTAAGQHSLRGSIVEE.

The region spanning 4–120 is the MTTase N-terminal domain; it reads RSFFIKTYGC…INELLERSRT (117 aa). Positions 13, 49, 83, 161, 165, and 168 each coordinate [4Fe-4S] cluster. Residues 147-382 enclose the Radical SAM core domain; that stretch reads HEGEFRKFVT…QARQDEIGLE (236 aa). The region spanning 385 to 446 is the TRAM domain; it reads QEYIGTTQEV…QHSLRGSIVE (62 aa).

It belongs to the methylthiotransferase family. MiaB subfamily. In terms of assembly, monomer. It depends on [4Fe-4S] cluster as a cofactor.

The protein resides in the cytoplasm. The enzyme catalyses N(6)-dimethylallyladenosine(37) in tRNA + (sulfur carrier)-SH + AH2 + 2 S-adenosyl-L-methionine = 2-methylsulfanyl-N(6)-dimethylallyladenosine(37) in tRNA + (sulfur carrier)-H + 5'-deoxyadenosine + L-methionine + A + S-adenosyl-L-homocysteine + 2 H(+). Its function is as follows. Catalyzes the methylthiolation of N6-(dimethylallyl)adenosine (i(6)A), leading to the formation of 2-methylthio-N6-(dimethylallyl)adenosine (ms(2)i(6)A) at position 37 in tRNAs that read codons beginning with uridine. The chain is tRNA-2-methylthio-N(6)-dimethylallyladenosine synthase from Desulfotalea psychrophila (strain LSv54 / DSM 12343).